The sequence spans 245 residues: Myelin protein P0 (245 aa).

The signal sequence occupies residues 1–28 (MEPSGLRTPCSLLALVLLSALVLTPTLA). Residues 29–143 (IEVYTDREVY…VGKSSYVHLQ (115 aa)) enclose the Ig-like V-type domain. Topologically, residues 29–153 (IEVYTDREVY…VQEKGPARAG (125 aa)) are extracellular. Cys49 and Cys125 are oxidised to a cystine. N-linked (GlcNAc...) asparagine glycosylation occurs at Asn120. Residues 154-174 (LILGIIIAVALALVIVVTILI) traverse the membrane as a helical segment. Residues 175–245 (LLIRYCWLRR…GIGDSRKDRK (71 aa)) are Cytoplasmic-facing. Composition is skewed to basic and acidic residues over residues 199-208 (KLHKAKDSSK) and 224-245 (TRGK…KDRK). The interval 199–245 (KLHKAKDSSKRSSRQTPILYAMLDQTRGKSSEKKAKGGIGDSRKDRK) is disordered.

It belongs to the myelin P0 protein family.

It is found in the cell membrane. Its function is as follows. Creation of an extracellular membrane face which guides the wrapping process and ultimately compacts adjacent lamellae. This chain is Myelin protein P0 (mpz), found in Xenopus laevis (African clawed frog).